We begin with the raw amino-acid sequence, 32 residues long: Giant hemoglobin AIV chain (32 aa).

This sequence belongs to the globin family. As to quaternary structure, giant hemoglobin is composed of four heme-containing chains (AI to AIV), and two linker chains (AV and AVI).

The polypeptide is Giant hemoglobin AIV chain (Lamellibrachia sp. (Deep-sea giant tube worm)).